The following is an 896-amino-acid chain: Histone-lysine N-methyltransferase CLF (896 aa).

2 disordered regions span residues 344 to 419 and 459 to 514; these read DNLK…NRRI and SGIK…DGCD. Over residues 358–390 the composition is skewed to low complexity; it reads GSSGQKTKSQQSESSSTARVSSESSESEVQLLS. Polar residues-rich tracts occupy residues 391–400, 465–476, and 485–498; these read NKSPQHSPGL, VVSSQCNSPSTR, and QMEN…AQSD. The span at 504–514 shows a compositional bias: basic and acidic residues; the sequence is NNEHSATDGCD. In terms of domain architecture, CXC spans 633-732; it reads RKRITERKDQ…TLGVPNQRGD (100 aa). The SET domain occupies 747 to 862; the sequence is QRVLLGRSDV…AGEELFYDYR (116 aa). Tyrosine 861 is a binding site for S-adenosyl-L-methionine. The span at 869–884 shows a compositional bias: basic and acidic residues; it reads PAWARKPEGPGAKDDA. The tract at residues 869–896 is disordered; the sequence is PAWARKPEGPGAKDDAQPSTGRAKKLAH.

Belongs to the class V-like SAM-binding methyltransferase superfamily. Histone-lysine methyltransferase family. EZ subfamily. In terms of assembly, interacts with FIE1. Component of the polycomb repressive complex 2 (PRC2), composed of the core PRC2 components FIE2, EMF2B and EZ1. PRC2 methylates 'Lys-27' residues of histone H3 (H3K27me3), leading to transcriptional repression of the affected target gene. In terms of tissue distribution, widely expressed. Highly expressed in young panicle.

The catalysed reaction is L-lysyl(27)-[histone H3] + 3 S-adenosyl-L-methionine = N(6),N(6),N(6)-trimethyl-L-lysyl(27)-[histone H3] + 3 S-adenosyl-L-homocysteine + 3 H(+). Functionally, polycomb group (PcG) protein. Catalytic subunit of some PcG multiprotein complex, which methylates 'Lys-27' of histone H3, leading to transcriptional repression of the affected target genes. PcG proteins act by forming multiprotein complexes, which are required to maintain the transcriptionally repressive state of homeotic genes throughout development. PcG proteins are not required to initiate repression, but to maintain it during later stages of development. Involved in the regulation of flowering. Represses flowering under long day (LD) conditions. Regulates the trimethylation on histone H3 'Lys-27' (H3K27me3) of the flowering regulators MADS14, MADS15, RFT1, EHD1, HD3A and LF. In Oryza sativa subsp. japonica (Rice), this protein is Histone-lysine N-methyltransferase CLF.